The following is a 786-amino-acid chain: Endonuclease MutS2 (786 aa).

ATP is bound at residue 335-342 (GPNTGGKT). The 76-residue stretch at 711-786 (LDLRGERFEN…GLGVTVVELK (76 aa)) folds into the Smr domain.

This sequence belongs to the DNA mismatch repair MutS family. MutS2 subfamily. Homodimer. Binds to stalled ribosomes, contacting rRNA.

Functionally, endonuclease that is involved in the suppression of homologous recombination and thus may have a key role in the control of bacterial genetic diversity. In terms of biological role, acts as a ribosome collision sensor, splitting the ribosome into its 2 subunits. Detects stalled/collided 70S ribosomes which it binds and splits by an ATP-hydrolysis driven conformational change. Acts upstream of the ribosome quality control system (RQC), a ribosome-associated complex that mediates the extraction of incompletely synthesized nascent chains from stalled ribosomes and their subsequent degradation. Probably generates substrates for RQC. In Bacillus cereus (strain AH820), this protein is Endonuclease MutS2.